We begin with the raw amino-acid sequence, 49 residues long: SPbeta prophage-derived uncharacterized protein YoqT (49 aa).

Residues 7–29 (CFVNWSFDKIMDYILIAGLYFVF) traverse the membrane as a helical segment.

The protein resides in the cell membrane. The protein is SPbeta prophage-derived uncharacterized protein YoqT (yoqT) of Bacillus subtilis (strain 168).